A 427-amino-acid chain; its full sequence is MASVVLIGTQWGDEGKGKVTDFLAEKADLVVRYQGGNNAGHTVVAKGEEFKLHLIPSGILYEDKTCVIGNGVVVDPKVLLEELAYLSERKVKTGKLLISSNAHVIMPYHRLLDALEEDSRGEHKIGTTKRGIGPAYMDKTLRIGIRIMDLIDDEEFAAKLRRNLQEKNNLLTKVYGVEPLDYDAIYQEYSGYAQKIRGLVADSSLVIDESLKAGEKVLFEGAQGTLLDLDHGTYPYVTSSHPIAGGACTGAGVGPTRINRVVGVIKAYTTRVGEGPFPTELADETGELMRQNGHEFGTTTGRARRCGWFDAVIARYAVRVSGISDFALMKLDVLSGFEKIKICVGYRVNNEVIYEFPQSQKIFKACEPVYEVIEGWQEDITGVTRFEDLPKAAQDYVRRIEQLTETQVTLIAVGPGREQTIVRGEIF.

Residues 12–18 and 40–42 contribute to the GTP site; these read GDEGKGK and GHT. Aspartate 13 (proton acceptor) is an active-site residue. Mg(2+)-binding residues include aspartate 13 and glycine 40. IMP-binding positions include 13-16, 38-41, threonine 128, arginine 142, glutamine 223, threonine 238, and arginine 302; these read DEGK and NAGH. Histidine 41 functions as the Proton donor in the catalytic mechanism. Residue 298-304 participates in substrate binding; the sequence is TTTGRAR. GTP is bound by residues arginine 304, 330–332, and 412–414; these read KLD and AVG.

Belongs to the adenylosuccinate synthetase family. As to quaternary structure, homodimer. Mg(2+) serves as cofactor.

The protein localises to the cytoplasm. The enzyme catalyses IMP + L-aspartate + GTP = N(6)-(1,2-dicarboxyethyl)-AMP + GDP + phosphate + 2 H(+). It participates in purine metabolism; AMP biosynthesis via de novo pathway; AMP from IMP: step 1/2. Functionally, plays an important role in the de novo pathway of purine nucleotide biosynthesis. Catalyzes the first committed step in the biosynthesis of AMP from IMP. In Desulfitobacterium hafniense (strain DSM 10664 / DCB-2), this protein is Adenylosuccinate synthetase.